The primary structure comprises 215 residues: Large ribosomal subunit protein bL25 (215 aa).

The disordered stretch occupies residues 174-215 (ETVVTVQPPATEKEEETEAAVTDSEPEVINEKEEPAEEAKEE). Positions 186 to 215 (KEEETEAAVTDSEPEVINEKEEPAEEAKEE) are enriched in acidic residues.

It belongs to the bacterial ribosomal protein bL25 family. CTC subfamily. As to quaternary structure, part of the 50S ribosomal subunit; part of the 5S rRNA/L5/L18/L25 subcomplex. Contacts the 5S rRNA. Binds to the 5S rRNA independently of L5 and L18.

In terms of biological role, this is one of the proteins that binds to the 5S RNA in the ribosome where it forms part of the central protuberance. This chain is Large ribosomal subunit protein bL25, found in Halalkalibacterium halodurans (strain ATCC BAA-125 / DSM 18197 / FERM 7344 / JCM 9153 / C-125) (Bacillus halodurans).